The following is an 82-amino-acid chain: Histidine-rich protein (82 aa).

This chain is Histidine-rich protein, found in Plasmodium falciparum (isolate fcm17 / Senegal).